The chain runs to 228 residues: Putative lipoprotein LprH (228 aa).

Positions 1–27 (MACLGRPGCRGWAGASLVLVVVLALAA) are cleaved as a signal peptide. Cys-28 is lipidated: N-palmitoyl cysteine. Cys-28 carries S-diacylglycerol cysteine lipidation. Residues 191–211 (GLAVVPHAVLVLSACGFKPGF) traverse the membrane as a helical segment.

The protein localises to the cell membrane. This is Putative lipoprotein LprH (lprH) from Mycobacterium bovis (strain ATCC BAA-935 / AF2122/97).